A 468-amino-acid polypeptide reads, in one-letter code: Chromatin assembly factor 1 subunit B (468 aa).

5 WD repeats span residues 11 to 52 (HDSQ…NGQN), 69 to 108 (HHEQ…TQQE), 143 to 182 (TAAA…LVCG), 185 to 224 (DHGH…AGVV), and 371 to 413 (IHYS…SRIE).

Belongs to the WD repeat HIR1 family. In terms of assembly, component of chromatin assembly factor 1 (CAF-1), composed of MSI1/p50, CAC2/p60 and CAC1/p90. Interacts with RTT106.

The protein resides in the nucleus. In terms of biological role, acts as a component of the histone chaperone complex chromatin assembly factor 1 (CAF-1), which assembles histone octamers onto replicating DNA. It performs the first step of the nucleosome assembly process, bringing newly synthesized histones H3 and H4 to replicating DNA; histones H2A/H2B can bind to this chromatin precursor subsequent to DNA replication to complete the histone octamer. Plays a role in the maintenance of heterochromatin. The polypeptide is Chromatin assembly factor 1 subunit B (CAC2) (Saccharomyces cerevisiae (strain ATCC 204508 / S288c) (Baker's yeast)).